The following is a 347-amino-acid chain: GMP reductase (347 aa).

108-131 (ADFEKTKQILDLNPALNFVCIDVA) provides a ligand contact to NADP(+). Residues Gly-181 and Gly-183 each coordinate K(+). Cys-186 (thioimidate intermediate) is an active-site residue. 216-239 (IVSDGGCTTPGDVAKAFGGGADFV) is a binding site for NADP(+).

The protein belongs to the IMPDH/GMPR family. GuaC type 1 subfamily. Homotetramer.

It catalyses the reaction IMP + NH4(+) + NADP(+) = GMP + NADPH + 2 H(+). In terms of biological role, catalyzes the irreversible NADPH-dependent deamination of GMP to IMP. It functions in the conversion of nucleobase, nucleoside and nucleotide derivatives of G to A nucleotides, and in maintaining the intracellular balance of A and G nucleotides. In Shigella boydii serotype 4 (strain Sb227), this protein is GMP reductase.